Here is a 640-residue protein sequence, read N- to C-terminus: MEKQNHSNESSDGHKSSPLFSSTTFLLALGSLGVVYGDIGTSPLYSIRECFHGTHAIALNEPNIFGVLSLVFWSMTMVICVKYVVFVMRADNHGMGGIFALLALIPGDSGRISPRLHGVVAFAATLGASLLYGDGVITPAISVLSAVEGLEVATEAAKPLVVPLTCVVLLALFLVQRRGTGVIGNVFGPIMIVWFVTIAALGAGKIVDRPDILLAVNPVYAFEFFAANRFVGVVVLGSVVLCITGGEALYADMGHFGRNPIRLSWLGLAFPALLLNYFGQGALLLSDPNFAFNPFYGLVPRTLLYPMVCLSTIATVIASQAMISGVFSLTQQAIQLGFCPRMRIIHTSRETRGQVYIPEVNYLLMIACLGLVLVFKKSSGLAGAYGIAVTADMALTSILFFFVITRTWKWSLARAVPLLVLFLFFDLSYFGANLFKIFDGGWITLTIAAIVATSMITWKDGRAALARKILSSRLPENLFLEDVARHNPPRVPGTAIFMSVSPMGIPVSLLHHYKHNQVLHEQVILLSITSTDTPTVPDRKKLHIVDLGQGFYRIIASYGFMETPNIPTIMRLASMQGIVTDPARTSYYLGRESLLTGGDSKMMQWRKALFVYMSRNAGTPTAYFDIPPDRVVELGLQIAI.

12 consecutive transmembrane segments (helical) span residues 19-39, 67-87, 118-138, 155-175, 181-201, 230-250, 265-285, 307-327, 355-375, 384-404, 415-435, and 437-457; these read LFSS…YGDI, VLSL…VVFV, GVVA…GVIT, EAAK…LFLV, GVIG…IAAL, FVGV…EALY, WLGL…ALLL, MVCL…SGVF, VYIP…VLVF, AYGI…FFVI, AVPL…ANLF, and IFDG…SMIT.

The protein belongs to the HAK/KUP transporter (TC 2.A.72) family.

The protein localises to the cell inner membrane. The catalysed reaction is K(+)(in) + H(+)(in) = K(+)(out) + H(+)(out). Functionally, transport of potassium into the cell. Likely operates as a K(+):H(+) symporter. This is Probable potassium transport system protein Kup 2 from Syntrophobacter fumaroxidans (strain DSM 10017 / MPOB).